Here is a 213-residue protein sequence, read N- to C-terminus: Charged multivesicular body protein 2b (213 aa).

Ala-2 carries the post-translational modification N-acetylalanine. The stretch at 25 to 55 forms a coiled coil; it reads QRAIIRDRAALEKQEKQLELEIKKMAKIGNK. The segment covering 179 to 194 has biased composition (low complexity); sequence AKAPSAARSLPSASTS. A disordered region spans residues 179–199; it reads AKAPSAARSLPSASTSKATIS. Ser-199 carries the post-translational modification Phosphoserine. The MIT-interacting motif signature appears at 201-211; sequence EEIERQLKALG.

Belongs to the SNF7 family. In terms of assembly, probable core component of the endosomal sorting required for transport complex III (ESCRT-III). ESCRT-III components are thought to multimerize to form a flat lattice on the perimeter membrane of the endosome. Several assembly forms of ESCRT-III may exist that interact and act sequentially. Interacts with CHMP2A. Interacts with VPS4A. Interacts with VPS4B; the interaction is direct. In terms of tissue distribution, widely expressed. Expressed in brain, heart, skeletal muscle, spleen, kidney, liver, small intestine, pancreas, lung, placenta and leukocytes. In brain, it is expressed in cerebellum, cerebral cortex, medulla, spinal cord, occipital lobe, frontal lobe, temporal lobe and putamen.

It localises to the cytoplasm. It is found in the cytosol. The protein resides in the late endosome membrane. Probable core component of the endosomal sorting required for transport complex III (ESCRT-III) which is involved in multivesicular bodies (MVBs) formation and sorting of endosomal cargo proteins into MVBs. MVBs contain intraluminal vesicles (ILVs) that are generated by invagination and scission from the limiting membrane of the endosome and mostly are delivered to lysosomes enabling degradation of membrane proteins, such as stimulated growth factor receptors, lysosomal enzymes and lipids. The MVB pathway appears to require the sequential function of ESCRT-O, -I,-II and -III complexes. ESCRT-III proteins mostly dissociate from the invaginating membrane before the ILV is released. The ESCRT machinery also functions in topologically equivalent membrane fission events, such as the terminal stages of cytokinesis and the budding of enveloped viruses (HIV-1 and other lentiviruses). ESCRT-III proteins are believed to mediate the necessary vesicle extrusion and/or membrane fission activities, possibly in conjunction with the AAA ATPase VPS4. The sequence is that of Charged multivesicular body protein 2b (CHMP2B) from Homo sapiens (Human).